Reading from the N-terminus, the 317-residue chain is Cytochrome c biogenesis protein CcsA (317 aa).

8 consecutive transmembrane segments (helical) span residues 17-37 (VVSI…IVGL), 44-64 (GMIV…IYSG), 71-91 (LYES…LPYL), 101-121 (ITSP…LTQI), 143-163 (MILS…LLVI), 223-243 (IISI…VWAN), 252-272 (WDPK…YLHI), and 284-304 (AIVA…INIL).

It belongs to the CcmF/CycK/Ccl1/NrfE/CcsA family. As to quaternary structure, may interact with Ccs1.

It is found in the plastid. The protein localises to the chloroplast thylakoid membrane. Required during biogenesis of c-type cytochromes (cytochrome c6 and cytochrome f) at the step of heme attachment. The protein is Cytochrome c biogenesis protein CcsA of Pelargonium hortorum (Common geranium).